Reading from the N-terminus, the 81-residue chain is Putative defensin-like protein 25 (81 aa).

Residues 1 to 23 (MASLKVFSFALILVLTFSVDVEG) form the signal peptide. 4 disulfides stabilise this stretch: Cys33/Cys81, Cys43/Cys68, Cys52/Cys77, and Cys56/Cys79.

This sequence belongs to the DEFL family.

Its subcellular location is the secreted. The protein is Putative defensin-like protein 25 of Arabidopsis thaliana (Mouse-ear cress).